The chain runs to 552 residues: Beta-hexosaminidase A (552 aa).

The first 15 residues, 1–15 (MRLIVLSLLFTSTLA), serve as a signal peptide directing secretion. Residue Asn-44 is glycosylated (N-linked (GlcNAc...) asparagine). Glu-322 (proton donor) is an active-site residue. Residues Asn-348, Asn-409, and Asn-457 are each glycosylated (N-linked (GlcNAc...) asparagine).

Belongs to the glycosyl hydrolase 20 family.

Its subcellular location is the lysosome. The enzyme catalyses Hydrolysis of terminal non-reducing N-acetyl-D-hexosamine residues in N-acetyl-beta-D-hexosaminides.. In terms of biological role, responsible for the degradation of GM2 gangliosides, and a variety of other molecules containing terminal N-acetyl hexosamines. Degrades chitotriose. The polypeptide is Beta-hexosaminidase A (Caenorhabditis briggsae).